The sequence spans 354 residues: Ubiquitin-conjugating enzyme E2 Z (354 aa).

The tract at residues 1 to 21 (MAESPTEEAATAGAGAAGPGA) is disordered. A UBC core domain is found at 99–253 (QCLLRIKRDI…IRHETIRVAV (155 aa)). The Glycyl thioester intermediate role is filled by cysteine 188. The tract at residues 332–354 (NAEMDSDSSSSGTETDLHGSLRV) is disordered. Serine 337 bears the Phosphoserine mark.

Belongs to the ubiquitin-conjugating enzyme family. As to expression, widely expressed. Highly in placenta, pancreas, spleen and testis.

Its subcellular location is the cytoplasm. It is found in the nucleus. It catalyses the reaction S-ubiquitinyl-[E1 ubiquitin-activating enzyme]-L-cysteine + [E2 ubiquitin-conjugating enzyme]-L-cysteine = [E1 ubiquitin-activating enzyme]-L-cysteine + S-ubiquitinyl-[E2 ubiquitin-conjugating enzyme]-L-cysteine.. The protein operates within protein modification; protein ubiquitination. In terms of biological role, catalyzes the covalent attachment of ubiquitin to other proteins. Specific substrate for UBA6, not charged with ubiquitin by UBE1. May be involved in apoptosis regulation. The protein is Ubiquitin-conjugating enzyme E2 Z (UBE2Z) of Homo sapiens (Human).